A 366-amino-acid chain; its full sequence is Cobalt-precorrin-5B C(1)-methyltransferase (366 aa).

It belongs to the CbiD family.

It catalyses the reaction Co-precorrin-5B + S-adenosyl-L-methionine = Co-precorrin-6A + S-adenosyl-L-homocysteine. The protein operates within cofactor biosynthesis; adenosylcobalamin biosynthesis; cob(II)yrinate a,c-diamide from sirohydrochlorin (anaerobic route): step 6/10. Its function is as follows. Catalyzes the methylation of C-1 in cobalt-precorrin-5B to form cobalt-precorrin-6A. The chain is Cobalt-precorrin-5B C(1)-methyltransferase from Hahella chejuensis (strain KCTC 2396).